Consider the following 118-residue polypeptide: Large ribosomal subunit protein bL21c (118 aa).

The protein belongs to the bacterial ribosomal protein bL21 family. In terms of assembly, part of the 50S ribosomal subunit.

The protein localises to the plastid. It localises to the chloroplast. This protein binds to 23S rRNA. The sequence is that of Large ribosomal subunit protein bL21c from Zygnema circumcarinatum (Green alga).